The following is a 429-amino-acid chain: Adenylosuccinate synthetase (429 aa).

GTP contacts are provided by residues 12-18 (GDEGKGK) and 40-42 (GHT). The Proton acceptor role is filled by Asp-13. Mg(2+) contacts are provided by Asp-13 and Gly-40. IMP is bound by residues 13–16 (DEGK), 38–41 (NAGH), Thr-129, Arg-143, Gln-223, Thr-238, and Arg-302. His-41 acts as the Proton donor in catalysis. Substrate is bound at residue 298–304 (TVTGRPR). GTP contacts are provided by residues Arg-304, 330-332 (KLD), and 412-414 (STS).

The protein belongs to the adenylosuccinate synthetase family. As to quaternary structure, homodimer. It depends on Mg(2+) as a cofactor.

The protein localises to the cytoplasm. It carries out the reaction IMP + L-aspartate + GTP = N(6)-(1,2-dicarboxyethyl)-AMP + GDP + phosphate + 2 H(+). Its pathway is purine metabolism; AMP biosynthesis via de novo pathway; AMP from IMP: step 1/2. Functionally, plays an important role in the de novo pathway of purine nucleotide biosynthesis. Catalyzes the first committed step in the biosynthesis of AMP from IMP. This chain is Adenylosuccinate synthetase, found in Gluconobacter oxydans (strain 621H) (Gluconobacter suboxydans).